The sequence spans 433 residues: Enolase 2 (433 aa).

A disordered region spans residues arginine 34 to lysine 56. Over residues glycine 44–lysine 56 the composition is skewed to basic and acidic residues. A (2R)-2-phosphoglycerate-binding site is contributed by glutamine 163. Residue glutamate 205 is the Proton donor of the active site. Positions 243, 290, and 317 each coordinate Mg(2+). Residues lysine 342, arginine 371, serine 372, and lysine 393 each contribute to the (2R)-2-phosphoglycerate site. The active-site Proton acceptor is the lysine 342.

This sequence belongs to the enolase family. Mg(2+) serves as cofactor.

It localises to the cytoplasm. The protein resides in the secreted. Its subcellular location is the cell surface. The enzyme catalyses (2R)-2-phosphoglycerate = phosphoenolpyruvate + H2O. It functions in the pathway carbohydrate degradation; glycolysis; pyruvate from D-glyceraldehyde 3-phosphate: step 4/5. Catalyzes the reversible conversion of 2-phosphoglycerate (2-PG) into phosphoenolpyruvate (PEP). It is essential for the degradation of carbohydrates via glycolysis. This is Enolase 2 from Lactococcus lactis subsp. cremoris (strain SK11).